Reading from the N-terminus, the 493-residue chain is Exosome complex component Rrp41 (493 aa).

Disordered stretches follow at residues 244 to 264 (VSEE…PSPV) and 291 to 493 (LASE…EKDE). Residues 249–259 (APEKGAEKEVL) show a composition bias toward basic and acidic residues. Positions 297 to 377 (PDFEDELEEE…ALEEETELEA (81 aa)) are enriched in acidic residues. The segment covering 383–400 (PELKEFDEIEARLEKEDA) has biased composition (basic and acidic residues). The segment covering 401 to 471 (SIEAEEEIEP…EAEEEPEEEK (71 aa)) has biased composition (acidic residues). Residues 472–493 (SEGPWKVVKDPSEAGTRGEKDE) are compositionally biased toward basic and acidic residues.

This sequence belongs to the RNase PH family. Rrp41 subfamily. In terms of assembly, component of the archaeal exosome complex. Forms a hexameric ring-like arrangement composed of 3 Rrp41-Rrp42 heterodimers. The hexameric ring associates with a trimer of Rrp4 and/or Csl4 subunits.

It is found in the cytoplasm. Its function is as follows. Catalytic component of the exosome, which is a complex involved in RNA degradation. Has 3'-&gt;5' exoribonuclease activity. Can also synthesize heteromeric RNA-tails. This is Exosome complex component Rrp41 from Methanosarcina mazei (strain ATCC BAA-159 / DSM 3647 / Goe1 / Go1 / JCM 11833 / OCM 88) (Methanosarcina frisia).